The sequence spans 384 residues: GTPase Obg (384 aa).

Residues 1–159 (MKFIDEAKIE…RSLQLELKVL (159 aa)) enclose the Obg domain. The disordered stretch occupies residues 20 to 46 (ATSFRREKFVPRGGPDGGDGGKGGSVW). The span at 33-43 (GPDGGDGGKGG) shows a compositional bias: gly residues. The region spanning 160 to 348 (ADVGLLGMPN…LVHQINQYLI (189 aa)) is the OBG-type G domain. Residues 166–173 (GMPNAGKS), 191–195 (FTTLH), 213–216 (DIPG), 284–287 (NKLD), and 329–331 (SAL) each bind GTP. Serine 173 and threonine 193 together coordinate Mg(2+). A disordered region spans residues 364–384 (ATNVEIAEQQPKTDTGVFKPE).

The protein belongs to the TRAFAC class OBG-HflX-like GTPase superfamily. OBG GTPase family. As to quaternary structure, monomer. Requires Mg(2+) as cofactor.

It localises to the cytoplasm. Functionally, an essential GTPase which binds GTP, GDP and possibly (p)ppGpp with moderate affinity, with high nucleotide exchange rates and a fairly low GTP hydrolysis rate. Plays a role in control of the cell cycle, stress response, ribosome biogenesis and in those bacteria that undergo differentiation, in morphogenesis control. This is GTPase Obg from Neisseria meningitidis serogroup A / serotype 4A (strain DSM 15465 / Z2491).